The chain runs to 119 residues: Large ribosomal subunit protein bL20 (119 aa).

Belongs to the bacterial ribosomal protein bL20 family.

Its function is as follows. Binds directly to 23S ribosomal RNA and is necessary for the in vitro assembly process of the 50S ribosomal subunit. It is not involved in the protein synthesizing functions of that subunit. In Shewanella sediminis (strain HAW-EB3), this protein is Large ribosomal subunit protein bL20.